A 211-amino-acid chain; its full sequence is Outer-membrane lipoprotein carrier protein (211 aa).

Residues 1–24 (MRNRIIVSACAALAMFAIQAPAHA) form the signal peptide.

Belongs to the LolA family. In terms of assembly, monomer.

It is found in the periplasm. Functionally, participates in the translocation of lipoproteins from the inner membrane to the outer membrane. Only forms a complex with a lipoprotein if the residue after the N-terminal Cys is not an aspartate (The Asp acts as a targeting signal to indicate that the lipoprotein should stay in the inner membrane). The protein is Outer-membrane lipoprotein carrier protein of Cupriavidus necator (strain ATCC 17699 / DSM 428 / KCTC 22496 / NCIMB 10442 / H16 / Stanier 337) (Ralstonia eutropha).